Here is a 159-residue protein sequence, read N- to C-terminus: Phosphopantetheine adenylyltransferase (159 aa).

Residue S9 participates in substrate binding. ATP is bound by residues 9 to 10 (SF) and H17. Residues K41, L73, and K87 each coordinate substrate. ATP-binding positions include 88–90 (GLR), E98, and 122–128 (YSFLSSS).

It belongs to the bacterial CoaD family. In terms of assembly, homohexamer. It depends on Mg(2+) as a cofactor.

Its subcellular location is the cytoplasm. The catalysed reaction is (R)-4'-phosphopantetheine + ATP + H(+) = 3'-dephospho-CoA + diphosphate. The protein operates within cofactor biosynthesis; coenzyme A biosynthesis; CoA from (R)-pantothenate: step 4/5. In terms of biological role, reversibly transfers an adenylyl group from ATP to 4'-phosphopantetheine, yielding dephospho-CoA (dPCoA) and pyrophosphate. This Streptomyces griseus subsp. griseus (strain JCM 4626 / CBS 651.72 / NBRC 13350 / KCC S-0626 / ISP 5235) protein is Phosphopantetheine adenylyltransferase.